We begin with the raw amino-acid sequence, 486 residues long: Membrane-bound lytic murein transglycosylase F (486 aa).

The first 26 residues, 1 to 26, serve as a signal peptide directing secretion; sequence MFSPMALRPRCAKWLIVTGLFLMLGA. Residues 27-267 are non-LT domain; that stretch reads CVEKPSTLER…RLKDRYYGHV (241 aa). The interval 268-486 is LT domain; sequence DVLGYVGAYT…TKPPEENPPL (219 aa). Glutamate 314 is an active-site residue. The disordered stretch occupies residues 464 to 486; the sequence is VAEGNLHVPGVNKTKPPEENPPL.

It in the N-terminal section; belongs to the bacterial solute-binding protein 3 family. In the C-terminal section; belongs to the transglycosylase Slt family.

The protein resides in the cell outer membrane. It carries out the reaction Exolytic cleavage of the (1-&gt;4)-beta-glycosidic linkage between N-acetylmuramic acid (MurNAc) and N-acetylglucosamine (GlcNAc) residues in peptidoglycan, from either the reducing or the non-reducing ends of the peptidoglycan chains, with concomitant formation of a 1,6-anhydrobond in the MurNAc residue.. Murein-degrading enzyme that degrades murein glycan strands and insoluble, high-molecular weight murein sacculi, with the concomitant formation of a 1,6-anhydromuramoyl product. Lytic transglycosylases (LTs) play an integral role in the metabolism of the peptidoglycan (PG) sacculus. Their lytic action creates space within the PG sacculus to allow for its expansion as well as for the insertion of various structures such as secretion systems and flagella. The protein is Membrane-bound lytic murein transglycosylase F of Pseudomonas fluorescens (strain ATCC BAA-477 / NRRL B-23932 / Pf-5).